We begin with the raw amino-acid sequence, 62 residues long: LNCHNQMSAQPPTTTRCSRWETNCYKKRWRDHRGYKTERGCGCPTVKKGIQLHCCTSDNCNN.

Disulfide bonds link Cys3–Cys24, Cys17–Cys41, Cys43–Cys54, and Cys55–Cys60.

It belongs to the three-finger toxin family. Short-chain subfamily. Type I alpha-neurotoxin sub-subfamily. As to expression, expressed by the venom gland.

Its subcellular location is the secreted. Functionally, binds to muscle nicotinic acetylcholine receptor (nAChR) and inhibit acetylcholine from binding to the receptor, thereby impairing neuromuscular transmission. This is Short neurotoxin 3 from Naja mossambica (Mozambique spitting cobra).